The chain runs to 156 residues: Regulatory protein RecX (156 aa).

Belongs to the RecX family.

Its subcellular location is the cytoplasm. In terms of biological role, modulates RecA activity. The polypeptide is Regulatory protein RecX (Pseudomonas putida (strain W619)).